A 618-amino-acid polypeptide reads, in one-letter code: DNA mismatch repair protein MutL (618 aa).

Belongs to the DNA mismatch repair MutL/HexB family.

Functionally, this protein is involved in the repair of mismatches in DNA. It is required for dam-dependent methyl-directed DNA mismatch repair. May act as a 'molecular matchmaker', a protein that promotes the formation of a stable complex between two or more DNA-binding proteins in an ATP-dependent manner without itself being part of a final effector complex. The protein is DNA mismatch repair protein MutL of Porphyromonas gingivalis (strain ATCC 33277 / DSM 20709 / CIP 103683 / JCM 12257 / NCTC 11834 / 2561).